Here is a 478-residue protein sequence, read N- to C-terminus: Sodium-coupled neutral amino acid transporter 5 (478 aa).

Positions M1 to L20 are disordered. Residues M1 to G57 are Cytoplasmic-facing. A helical membrane pass occupies residues M58 to A80. Over H81–C93 the chain is Extracellular. The helical transmembrane segment at I94 to I114 threads the bilayer. Topologically, residues R115 to V131 are cytoplasmic. The chain crosses the membrane as a helical span at residues V132–I152. At K153–W172 the chain is on the extracellular side. The helical transmembrane segment at F173–L193 threads the bilayer. Residues M194–G198 lie on the Cytoplasmic side of the membrane. The helical transmembrane segment at Y199 to I219 threads the bilayer. Over Y220 to Q263 the chain is Extracellular. A disulfide bridge connects residues C227 and C253. An N-linked (GlcNAc...) asparagine glycan is attached at N232. Residues M264–I284 traverse the membrane as a helical segment. The Cytoplasmic portion of the chain corresponds to Y285–N301. Residues V302–F322 traverse the membrane as a helical segment. The Extracellular segment spans residues Y323–L340. Residues I341–F361 traverse the membrane as a helical segment. Topologically, residues P362–H382 are cytoplasmic. Residues V383 to I403 form a helical membrane-spanning segment. The Extracellular portion of the chain corresponds to R404–D405. Residues I406–F426 form a helical membrane-spanning segment. The Cytoplasmic segment spans residues Y427–Q445. Residues A446–A466 traverse the membrane as a helical segment. The Extracellular segment spans residues N467 to H478.

Belongs to the amino acid/polyamine transporter 2 family.

It localises to the cell membrane. The enzyme catalyses L-serine(out) + Na(+)(out) + H(+)(in) = L-serine(in) + Na(+)(in) + H(+)(out). The catalysed reaction is L-alanine(out) + Na(+)(out) + H(+)(in) = L-alanine(in) + Na(+)(in) + H(+)(out). It catalyses the reaction glycine(out) + Na(+)(out) + H(+)(in) = glycine(in) + Na(+)(in) + H(+)(out). It carries out the reaction L-glutamine(out) + Na(+)(out) + H(+)(in) = L-glutamine(in) + Na(+)(in) + H(+)(out). The enzyme catalyses L-asparagine(out) + Na(+)(out) + H(+)(in) = L-asparagine(in) + Na(+)(in) + H(+)(out). The catalysed reaction is L-histidine(out) + Na(+)(out) + H(+)(in) = L-histidine(in) + Na(+)(in) + H(+)(out). It catalyses the reaction L-cysteine(out) + Na(+)(out) + H(+)(in) = L-cysteine(in) + Na(+)(in) + H(+)(out). Its activity is regulated as follows. Not inhibited by lithium. Partial allosteric regulation on ions sodium binding. Its function is as follows. Symporter that cotransports neutral amino acids and sodium ions, coupled to an H(+) antiporter activity. Releases L-glutamine and glycine from astroglial cells and may participate in the glutamate/GABA-glutamine cycle and the NMDA receptors activation. In addition contributes significantly to L-glutamine uptake in retina, namely in ganglion and Mueller cells and, therefore participates in the retinal glutamate-glutamine cycle. The transport activity is pH sensitive, Li(+) tolerant, bidirectional and associated with large uncoupled fluxes of protons. The transport is electroneutral coupled to the cotransport of 1 Na(+) and the antiport of 1 H(+). May have particular importance for modulation of net hepatic glutamine flux. The polypeptide is Sodium-coupled neutral amino acid transporter 5 (Bos taurus (Bovine)).